A 175-amino-acid polypeptide reads, in one-letter code: NAD(P)H-quinone oxidoreductase subunit J (175 aa).

This sequence belongs to the complex I 30 kDa subunit family. In terms of assembly, NDH-1 can be composed of about 15 different subunits; different subcomplexes with different compositions have been identified which probably have different functions.

It localises to the cellular thylakoid membrane. The catalysed reaction is a plastoquinone + NADH + (n+1) H(+)(in) = a plastoquinol + NAD(+) + n H(+)(out). It carries out the reaction a plastoquinone + NADPH + (n+1) H(+)(in) = a plastoquinol + NADP(+) + n H(+)(out). NDH-1 shuttles electrons from an unknown electron donor, via FMN and iron-sulfur (Fe-S) centers, to quinones in the respiratory and/or the photosynthetic chain. The immediate electron acceptor for the enzyme in this species is believed to be plastoquinone. Couples the redox reaction to proton translocation, and thus conserves the redox energy in a proton gradient. Cyanobacterial NDH-1 also plays a role in inorganic carbon-concentration. In Nostoc sp. (strain PCC 7120 / SAG 25.82 / UTEX 2576), this protein is NAD(P)H-quinone oxidoreductase subunit J.